We begin with the raw amino-acid sequence, 253 residues long: 1-(5-phosphoribosyl)-5-[(5-phosphoribosylamino)methylideneamino] imidazole-4-carboxamide isomerase (253 aa).

Aspartate 19 acts as the Proton acceptor in catalysis. Aspartate 141 serves as the catalytic Proton donor.

The protein belongs to the HisA/HisF family.

The protein localises to the cytoplasm. It catalyses the reaction 1-(5-phospho-beta-D-ribosyl)-5-[(5-phospho-beta-D-ribosylamino)methylideneamino]imidazole-4-carboxamide = 5-[(5-phospho-1-deoxy-D-ribulos-1-ylimino)methylamino]-1-(5-phospho-beta-D-ribosyl)imidazole-4-carboxamide. The protein operates within amino-acid biosynthesis; L-histidine biosynthesis; L-histidine from 5-phospho-alpha-D-ribose 1-diphosphate: step 4/9. In Rhodopirellula baltica (strain DSM 10527 / NCIMB 13988 / SH1), this protein is 1-(5-phosphoribosyl)-5-[(5-phosphoribosylamino)methylideneamino] imidazole-4-carboxamide isomerase.